The primary structure comprises 424 residues: Serine--tRNA ligase (424 aa).

L-serine is bound at residue Thr230 to Glu232. Residue Arg261–Glu263 participates in ATP binding. Glu284 contacts L-serine. Residue Glu348 to Ser351 coordinates ATP. Ser384 contributes to the L-serine binding site.

This sequence belongs to the class-II aminoacyl-tRNA synthetase family. Type-1 seryl-tRNA synthetase subfamily. Homodimer. The tRNA molecule binds across the dimer.

It localises to the cytoplasm. The enzyme catalyses tRNA(Ser) + L-serine + ATP = L-seryl-tRNA(Ser) + AMP + diphosphate + H(+). It catalyses the reaction tRNA(Sec) + L-serine + ATP = L-seryl-tRNA(Sec) + AMP + diphosphate + H(+). Its pathway is aminoacyl-tRNA biosynthesis; selenocysteinyl-tRNA(Sec) biosynthesis; L-seryl-tRNA(Sec) from L-serine and tRNA(Sec): step 1/1. Functionally, catalyzes the attachment of serine to tRNA(Ser). Is also able to aminoacylate tRNA(Sec) with serine, to form the misacylated tRNA L-seryl-tRNA(Sec), which will be further converted into selenocysteinyl-tRNA(Sec). The chain is Serine--tRNA ligase from Streptococcus pneumoniae serotype 2 (strain D39 / NCTC 7466).